The chain runs to 381 residues: Cell division protein FtsZ (381 aa).

Residues Met1 to Glu25 are disordered. Over residues Ala7 to Pro17 the composition is skewed to basic and acidic residues. Residues Gly48–Asn52, Gly135–Gly137, Glu166, Arg170, and Asp213 contribute to the GTP site.

This sequence belongs to the FtsZ family. Homodimer. Polymerizes to form a dynamic ring structure in a strictly GTP-dependent manner. Interacts directly with several other division proteins.

It is found in the cytoplasm. Functionally, essential cell division protein that forms a contractile ring structure (Z ring) at the future cell division site. The regulation of the ring assembly controls the timing and the location of cell division. One of the functions of the FtsZ ring is to recruit other cell division proteins to the septum to produce a new cell wall between the dividing cells. Binds GTP and shows GTPase activity. The protein is Cell division protein FtsZ of Methanothermobacter thermautotrophicus (strain ATCC 29096 / DSM 1053 / JCM 10044 / NBRC 100330 / Delta H) (Methanobacterium thermoautotrophicum).